The chain runs to 87 residues: Phosphoribosyl-ATP pyrophosphatase (87 aa).

It belongs to the PRA-PH family.

It is found in the cytoplasm. The catalysed reaction is 1-(5-phospho-beta-D-ribosyl)-ATP + H2O = 1-(5-phospho-beta-D-ribosyl)-5'-AMP + diphosphate + H(+). It participates in amino-acid biosynthesis; L-histidine biosynthesis; L-histidine from 5-phospho-alpha-D-ribose 1-diphosphate: step 2/9. This is Phosphoribosyl-ATP pyrophosphatase from Arthrobacter sp. (strain FB24).